A 391-amino-acid chain; its full sequence is Formate-dependent phosphoribosylglycinamide formyltransferase (391 aa).

N(1)-(5-phospho-beta-D-ribosyl)glycinamide is bound by residues 20 to 21 and Glu80; that span reads EL. ATP contacts are provided by residues Arg112, Lys153, 158 to 163, 193 to 196, and Glu201; these read SSGKGQ and EGFV. In terms of domain architecture, ATP-grasp spans 117–306; sequence RLAAEELGLP…EFALHVRAFT (190 aa). 2 residues coordinate Mg(2+): Glu265 and Glu277. N(1)-(5-phospho-beta-D-ribosyl)glycinamide is bound by residues Asp284, Lys354, and 361-362; that span reads RR.

The protein belongs to the PurK/PurT family. In terms of assembly, homodimer.

It catalyses the reaction N(1)-(5-phospho-beta-D-ribosyl)glycinamide + formate + ATP = N(2)-formyl-N(1)-(5-phospho-beta-D-ribosyl)glycinamide + ADP + phosphate + H(+). The protein operates within purine metabolism; IMP biosynthesis via de novo pathway; N(2)-formyl-N(1)-(5-phospho-D-ribosyl)glycinamide from N(1)-(5-phospho-D-ribosyl)glycinamide (formate route): step 1/1. Functionally, involved in the de novo purine biosynthesis. Catalyzes the transfer of formate to 5-phospho-ribosyl-glycinamide (GAR), producing 5-phospho-ribosyl-N-formylglycinamide (FGAR). Formate is provided by PurU via hydrolysis of 10-formyl-tetrahydrofolate. In Vibrio cholerae serotype O1 (strain ATCC 39315 / El Tor Inaba N16961), this protein is Formate-dependent phosphoribosylglycinamide formyltransferase.